The following is a 267-amino-acid chain: Apolipoprotein A-I (267 aa).

The signal sequence occupies residues 1-18 (MKAAVLTLAVLFLTGSQA). 2 consecutive repeat copies span residues 68–89 (LKLLDNWDSLTSTVNKLREDLG) and 90–111 (PVTQEFWDNLEKETGWLRQEMS). Positions 68 to 267 (LKLLDNWDSL…EEYAKKLSSQ (200 aa)) are 10 X approximate tandem repeats. The residue at position 110 (Met-110) is a Methionine sulfoxide. One copy of the 3; half-length repeat lies at 112–122 (KDLEEVKAKVQ). 5 consecutive repeat copies span residues 123-144 (PYLDDFQKKWQEEVKLYSQKLE), 145-166 (PLRTEFQEGALQKLQDLQEKLS), 167-188 (PLAEQVRDRARAHVDTLRTQLA), 189-210 (PYSDELRQRLATRLEVLKESGG), and 211-232 (ASLAEYHAKASEHLSALGEKAK). A 9; half-length repeat occupies 233-243 (PALEDLRQGLL). Repeat 10 spans residues 244–267 (PVLESFKVSFLSALEEYAKKLSSQ).

This sequence belongs to the apolipoprotein A1/A4/E family. Homodimer. Interacts with APOA1BP and CLU. Component of a sperm activating protein complex (SPAP), consisting of APOA1, an immunoglobulin heavy chain, an immunoglobulin light chain and albumin. Interacts with NDRG1. Interacts with SCGB3A2. Interacts with NAXE and YJEFN3. Glycosylated. In terms of processing, palmitoylated. Post-translationally, phosphorylation sites are present in the extracellular medium.

Its subcellular location is the secreted. Participates in the reverse transport of cholesterol from tissues to the liver for excretion by promoting cholesterol efflux from tissues and by acting as a cofactor for the lecithin cholesterol acyltransferase (LCAT). As part of the SPAP complex, activates spermatozoa motility. The sequence is that of Apolipoprotein A-I (APOA1) from Cebus imitator (Panamanian white-faced capuchin).